The primary structure comprises 403 residues: Tyrosine--tRNA ligase (403 aa).

Positions 42 to 51 (PTAPDLHLGH) match the 'HIGH' region motif. Positions 226 to 230 (KMSKS) match the 'KMSKS' region motif. Residue lysine 229 coordinates ATP. Residues 336 to 396 (MPISAVLNKA…GKKAFGRITL (61 aa)) enclose the S4 RNA-binding domain.

Belongs to the class-I aminoacyl-tRNA synthetase family. TyrS type 2 subfamily. As to quaternary structure, homodimer.

It is found in the cytoplasm. The catalysed reaction is tRNA(Tyr) + L-tyrosine + ATP = L-tyrosyl-tRNA(Tyr) + AMP + diphosphate + H(+). Functionally, catalyzes the attachment of tyrosine to tRNA(Tyr) in a two-step reaction: tyrosine is first activated by ATP to form Tyr-AMP and then transferred to the acceptor end of tRNA(Tyr). This Pseudomonas syringae pv. tomato (strain ATCC BAA-871 / DC3000) protein is Tyrosine--tRNA ligase.